Consider the following 29-residue polypeptide: Varv peptide A (29 aa).

The segment at residues 1 to 29 (GLPVCGETCVGGTCNTPGCSCSWPVCTRN) is a cross-link (cyclopeptide (Gly-Asn)). Intrachain disulfides connect cysteine 5–cysteine 19, cysteine 9–cysteine 21, and cysteine 14–cysteine 26.

In terms of processing, this is a cyclic peptide.

Probably participates in a plant defense mechanism. Has cytotoxic activity against a variety of drug-resistant and drug-sensitive human tumor cell lines, and against primary chronic lymphocytic leukemia cells. Has weak cytotoxic activity against primary ovarian carcinoma cells or normal lymphocytes. This chain is Varv peptide A, found in Viola arvensis (European field pansy).